Reading from the N-terminus, the 223-residue chain is Sigma non-opioid intracellular receptor 1 (223 aa).

Over 1 to 9 the chain is Lumenal; the sequence is MQWAVGRRW. A targeting to endoplasmic reticulum-associated lipid droplets region spans residues 2 to 8; sequence QWAVGRR. The helical transmembrane segment at 10–30 threads the bilayer; that stretch reads AWAALLLAVAAVLTQVVWLWL. At 31 to 223 the chain is on the cytoplasmic side; that stretch reads GTQSFVFQRE…LTTYLFGQDP (193 aa). An important for ligand-binding region spans residues 99 to 106; it reads SLSEYVLL. The segment at 177–223 is C-terminal hydrophobic region; it reads VIPSTLAFALADTVFSTQDFLTLFYTLRSYARGLRLELTTYLFGQDP.

It belongs to the ERG2 family. As to quaternary structure, homotrimer. Forms a ternary complex with ANK2 and ITPR3. The complex is disrupted by agonists. Interacts with KCNA4. Interacts with KCNA2; cocaine consumption leads to increased interaction. Interacts with RNF112 in an oxidative stress-regulated manner. As to expression, widely expressed with higher expression in liver, colon, prostate, placenta, small intestine, heart and pancreas. Expressed in the retina by retinal pigment epithelial cells. Expressed in alpha-motor neurons.

It is found in the nucleus inner membrane. The protein localises to the nucleus outer membrane. The protein resides in the nucleus envelope. It localises to the cytoplasmic vesicle. Its subcellular location is the endoplasmic reticulum membrane. It is found in the membrane. The protein localises to the lipid droplet. The protein resides in the cell junction. It localises to the cell membrane. Its subcellular location is the cell projection. It is found in the growth cone. The protein localises to the postsynaptic density membrane. In terms of biological role, functions in lipid transport from the endoplasmic reticulum and is involved in a wide array of cellular functions probably through regulation of the biogenesis of lipid microdomains at the plasma membrane. Involved in the regulation of different receptors it plays a role in BDNF signaling and EGF signaling. Also regulates ion channels like the potassium channel and could modulate neurotransmitter release. Plays a role in calcium signaling through modulation together with ANK2 of the ITP3R-dependent calcium efflux at the endoplasmic reticulum. Plays a role in several other cell functions including proliferation, survival and death. Originally identified for its ability to bind various psychoactive drugs it is involved in learning processes, memory and mood alteration. Necessary for proper mitochondrial axonal transport in motor neurons, in particular the retrograde movement of mitochondria. Plays a role in protecting cells against oxidative stress-induced cell death via its interaction with RNF112. The sequence is that of Sigma non-opioid intracellular receptor 1 (SIGMAR1) from Homo sapiens (Human).